The chain runs to 307 residues: Auxin-induced protein PCNT115 (307 aa).

Tyr64 (proton donor) is an active-site residue. His136 contacts substrate. Position 215–225 (215–225 (SPLGRGFLSSG)) interacts with NADP(+).

Belongs to the aldo/keto reductase family. Aldo/keto reductase 2 subfamily.

In Nicotiana tabacum (Common tobacco), this protein is Auxin-induced protein PCNT115.